Reading from the N-terminus, the 215-residue chain is Inositol diphosphatase DSP1 (215 aa).

In terms of domain architecture, Tyrosine-protein phosphatase spans 58-209 (NFSMVDNGIF…VSSFSHIPMS (152 aa)). The tract at residues 114-126 (FGIEGNKEPFVNI) is WPD loop important for active site topology. Residues Asn-125, Ile-126, His-129, and Lys-130 each contribute to the 1D-myo-inositol hexakisphosphate site. Cys-150 serves as the catalytic Phosphocysteine intermediate.

This sequence belongs to the protein-tyrosine phosphatase family. Atypical dual-specificity phosphatase Siw14-like subfamily. As to quaternary structure, homodimer and homohexamer; behaves as a monomer in solution. Highly expressed in siliques and at lower levels in roots, leaves and flowers.

It carries out the reaction 5-diphospho-1D-myo-inositol 1,2,3,4,6-pentakisphosphate + H2O = 1D-myo-inositol hexakisphosphate + phosphate + H(+). The catalysed reaction is 1,5-bis(diphospho)-1D-myo-inositol 2,3,4,6-tetrakisphosphate + H2O = 1-diphospho-1D-myo-inositol 2,3,4,5,6-pentakisphosphate + phosphate + 2 H(+). It catalyses the reaction 3,5-bis(diphospho)-1D-myo-inositol 1,2,4,6-tetrakisphosphate + H2O = 3-diphospho-1D-myo-inositol 1,2,4,5,6-pentakisphosphate + phosphate + 2 H(+). The enzyme catalyses 6-diphospho-1D-myo-inositol pentakisphosphate + H2O = 1D-myo-inositol hexakisphosphate + phosphate + H(+). It carries out the reaction 5-diphospho-1D-myo-inositol 1,3,4,6-tetrakisphosphate + H2O = 1D-myo-inositol 1,3,4,5,6-pentakisphosphate + phosphate + H(+). Its activity is regulated as follows. Inhibited by manganese, calcium and zinc ions but not magnesium ions. In terms of biological role, cleaves the beta-phosphate at the 5-position of soluble inositol pyrophosphates. Has highest activity on 5-diphosphoinositol 1,2,3,4,6-pentakisphosphate (5-InsP(7)), 1,5-bis-diphosphoinositol 2,3,4,6-tetrakisphosphate (1,5-InsP(8)) and 3,5-InsP(8), but has weak activity against 1-diphosphoinositol 2,3,4,5,6-pentakisphosphate (1-InsP(7)). Dephosphorylates the phosphoinositides PI(3,4,5)P3, PI(3,5)P2, but not PI(3)P, PI(3,4)P2 or PI(4,5)P2. Possesses phosphotyrosine phosphatase activity in vitro, and can hydrolyze para-nitrophenyl phosphate, O-methylfluorescein phosphate, polyphosphate and ATP. This Arabidopsis thaliana (Mouse-ear cress) protein is Inositol diphosphatase DSP1.